The following is a 556-amino-acid chain: MGVHSFLCSSPWFRMVTDLQKEIQEAVQQRRNFAIISHPDAGKTTLTEKLLLYGGAIQEAGAVKAKRSQRAATSDWMELEKQRGISITSTVLQFNYHDCTINLLDTPGHQDFSEDTYRTLAAADNAVMLEDAAKGLEPQTRKLFEVCRMRNIPIFTFFNKMDRPGREPLELLDEIEQELGLQTYAVNWPIGSGDRFRGVFDRRKQQVHLFERSVHGKRQAKDTTLEWGDPQLADLIEPDLLQQLQDELELLEGVGTEFDLEAIHAGQLTPVFWGSAMTNFGVELFLEAFLDYALKPGARRSSVGDMAPDYPEFSGFVFKLQANMDPRHRDRIAFVRVCTGKFEKDMTVQHARSGRTLRLSRPQKLFGQDREVLDDAYPGDVIGLNNPGMFAIGDTIYTGKRLEYDGIPCFSPEIFAYLRNPNPSKFKPFRKGVSELREEGAVQIMYSADSAKRDPILAAVGQLQLEVVQYRLENEYGVETLLEPLPFSVARWVEGGWDVLEKVGRLFNTTTVKDTWGRPVLLFKNEWNLRQIEADHPELQLRSVAPVAAGQEPIEV.

Residues 28–297 (QQRRNFAIIS…AFLDYALKPG (270 aa)) form the tr-type G domain. Residues 37-44 (SHPDAGKT), 105-109 (DTPGH), and 159-162 (NKMD) contribute to the GTP site.

This sequence belongs to the TRAFAC class translation factor GTPase superfamily. Classic translation factor GTPase family. PrfC subfamily.

It localises to the cytoplasm. In terms of biological role, increases the formation of ribosomal termination complexes and stimulates activities of RF-1 and RF-2. It binds guanine nucleotides and has strong preference for UGA stop codons. It may interact directly with the ribosome. The stimulation of RF-1 and RF-2 is significantly reduced by GTP and GDP, but not by GMP. This is Peptide chain release factor 3 from Synechococcus elongatus (strain ATCC 33912 / PCC 7942 / FACHB-805) (Anacystis nidulans R2).